A 200-amino-acid polypeptide reads, in one-letter code: Cytochrome c biogenesis ATP-binding export protein CcmA (200 aa).

In terms of domain architecture, ABC transporter spans L3–V199. Position 35–42 (G35–T42) interacts with ATP.

It belongs to the ABC transporter superfamily. CcmA exporter (TC 3.A.1.107) family. In terms of assembly, the complex is composed of two ATP-binding proteins (CcmA) and two transmembrane proteins (CcmB).

The protein localises to the cell inner membrane. It carries out the reaction heme b(in) + ATP + H2O = heme b(out) + ADP + phosphate + H(+). In terms of biological role, part of the ABC transporter complex CcmAB involved in the biogenesis of c-type cytochromes; once thought to export heme, this seems not to be the case, but its exact role is uncertain. Responsible for energy coupling to the transport system. The chain is Cytochrome c biogenesis ATP-binding export protein CcmA from Bradyrhizobium diazoefficiens (strain JCM 10833 / BCRC 13528 / IAM 13628 / NBRC 14792 / USDA 110).